A 286-amino-acid chain; its full sequence is Polyamine aminopropyltransferase (286 aa).

The 236-residue stretch at 2 to 237 (DLWFSEVHTP…GYWLFGFASK (236 aa)) folds into the PABS domain. S-methyl-5'-thioadenosine is bound at residue Gln-31. Asp-86 serves as a coordination point for spermidine. Residues Glu-106 and 137–138 (NG) contribute to the S-methyl-5'-thioadenosine site. The active-site Proton acceptor is Asp-155.

It belongs to the spermidine/spermine synthase family. In terms of assembly, homodimer or homotetramer.

It localises to the cytoplasm. It carries out the reaction S-adenosyl 3-(methylsulfanyl)propylamine + putrescine = S-methyl-5'-thioadenosine + spermidine + H(+). It participates in amine and polyamine biosynthesis; spermidine biosynthesis; spermidine from putrescine: step 1/1. Its function is as follows. Catalyzes the irreversible transfer of a propylamine group from the amino donor S-adenosylmethioninamine (decarboxy-AdoMet) to putrescine (1,4-diaminobutane) to yield spermidine. The polypeptide is Polyamine aminopropyltransferase (Streptococcus pneumoniae serotype 4 (strain ATCC BAA-334 / TIGR4)).